Here is a 177-residue protein sequence, read N- to C-terminus: tRNA-splicing endonuclease (177 aa).

Residues Tyr114, His123, and Lys154 contribute to the active site.

This sequence belongs to the tRNA-intron endonuclease family. Archaeal short subfamily. In terms of assembly, homotetramer; although the tetramer contains four active sites, only two participate in the cleavage. Therefore, it should be considered as a dimer of dimers.

It carries out the reaction pretRNA = a 3'-half-tRNA molecule with a 5'-OH end + a 5'-half-tRNA molecule with a 2',3'-cyclic phosphate end + an intron with a 2',3'-cyclic phosphate and a 5'-hydroxyl terminus.. Functionally, endonuclease that removes tRNA introns. Cleaves pre-tRNA at the 5'- and 3'-splice sites to release the intron. The products are an intron and two tRNA half-molecules bearing 2',3' cyclic phosphate and 5'-OH termini. Recognizes a pseudosymmetric substrate in which 2 bulged loops of 3 bases are separated by a stem of 4 bp. This Methanococcus maripaludis (strain DSM 14266 / JCM 13030 / NBRC 101832 / S2 / LL) protein is tRNA-splicing endonuclease.